The chain runs to 98 residues: Putative pterin-4-alpha-carbinolamine dehydratase (98 aa).

Belongs to the pterin-4-alpha-carbinolamine dehydratase family.

It carries out the reaction (4aS,6R)-4a-hydroxy-L-erythro-5,6,7,8-tetrahydrobiopterin = (6R)-L-erythro-6,7-dihydrobiopterin + H2O. This is Putative pterin-4-alpha-carbinolamine dehydratase from Chelativorans sp. (strain BNC1).